The sequence spans 198 residues: tRNA (pseudouridine(54)-N(1))-methyltransferase (198 aa).

S-adenosyl-L-methionine is bound by residues Leu-130, Gly-153, 176 to 181, and Cys-186; that span reads LSPLEL.

Belongs to the methyltransferase superfamily. TrmY family. In terms of assembly, homodimer.

It localises to the cytoplasm. It catalyses the reaction pseudouridine(54) in tRNA + S-adenosyl-L-methionine = N(1)-methylpseudouridine(54) in tRNA + S-adenosyl-L-homocysteine + H(+). Specifically catalyzes the N1-methylation of pseudouridine at position 54 (Psi54) in tRNAs. This is tRNA (pseudouridine(54)-N(1))-methyltransferase from Methanococcus maripaludis (strain C7 / ATCC BAA-1331).